Here is a 161-residue protein sequence, read N- to C-terminus: MPYTVSSPNQLVYFGSVWADPIALIDLCTVSLGNQFQTQNARTTVQQQFSDLFKTVPTRTIRFSDGENGFRVFRYNSTLDPLITALLNSFDTRNRIIETENPANPNTAEIASATQRVDDATVSIRACINNLMNELARGTGMLNTVSFETISNLTWTTAATT.

The protein belongs to the virgaviridae capsid protein family.

The protein resides in the virion. In terms of biological role, capsid protein self-assembles to form rod-shaped virions about 18 nm in diameter with a central canal enclosing the viral genomic RNA. The sequence is that of Capsid protein (CP) from Capsicum annuum (Capsicum pepper).